The primary structure comprises 479 residues: Poly(A) polymerase catalytic subunit (479 aa).

Catalysis depends on residues aspartate 202 and aspartate 204. Ca(2+)-binding residues include aspartate 202, aspartate 204, and aspartate 253.

The protein belongs to the poxviridae poly(A) polymerase catalytic subunit family. As to quaternary structure, heterodimer of a large (catalytic) subunit and a small (regulatory) subunit.

The enzyme catalyses RNA(n) + ATP = RNA(n)-3'-adenine ribonucleotide + diphosphate. In terms of biological role, polymerase that creates the 3'-poly(A) tail of mRNA's. The protein is Poly(A) polymerase catalytic subunit (OPG063) of Bos taurus (Bovine).